Here is a 403-residue protein sequence, read N- to C-terminus: Acetate kinase (403 aa).

Position 7 (N7) interacts with Mg(2+). K14 lines the ATP pocket. R97 serves as a coordination point for substrate. Residue D154 is the Proton donor/acceptor of the active site. ATP is bound by residues 213 to 217 (HLGNG), 287 to 289 (DMR), and 335 to 339 (GIGEN). E388 is a Mg(2+) binding site.

This sequence belongs to the acetokinase family. In terms of assembly, homodimer. Requires Mg(2+) as cofactor. The cofactor is Mn(2+).

The protein resides in the cytoplasm. It catalyses the reaction acetate + ATP = acetyl phosphate + ADP. Its pathway is metabolic intermediate biosynthesis; acetyl-CoA biosynthesis; acetyl-CoA from acetate: step 1/2. Its function is as follows. Catalyzes the formation of acetyl phosphate from acetate and ATP. Can also catalyze the reverse reaction. The protein is Acetate kinase of Synechococcus sp. (strain JA-2-3B'a(2-13)) (Cyanobacteria bacterium Yellowstone B-Prime).